The primary structure comprises 196 residues: Protein GrpE (196 aa).

A disordered region spans residues 1–40 (MSSKEQKTPEGQAPEEIIMDQHEEVEAVEPNDSAEQVDPR).

This sequence belongs to the GrpE family. In terms of assembly, homodimer.

Its subcellular location is the cytoplasm. Functionally, participates actively in the response to hyperosmotic and heat shock by preventing the aggregation of stress-denatured proteins, in association with DnaK and GrpE. It is the nucleotide exchange factor for DnaK and may function as a thermosensor. Unfolded proteins bind initially to DnaJ; upon interaction with the DnaJ-bound protein, DnaK hydrolyzes its bound ATP, resulting in the formation of a stable complex. GrpE releases ADP from DnaK; ATP binding to DnaK triggers the release of the substrate protein, thus completing the reaction cycle. Several rounds of ATP-dependent interactions between DnaJ, DnaK and GrpE are required for fully efficient folding. This is Protein GrpE from Salmonella enteritidis PT4 (strain P125109).